A 603-amino-acid polypeptide reads, in one-letter code: Elongation factor 4 (603 aa).

A tr-type G domain is found at V7–P189. GTP is bound by residues D19 to T24 and N136 to D139.

This sequence belongs to the TRAFAC class translation factor GTPase superfamily. Classic translation factor GTPase family. LepA subfamily.

It localises to the cell inner membrane. The catalysed reaction is GTP + H2O = GDP + phosphate + H(+). Its function is as follows. Required for accurate and efficient protein synthesis under certain stress conditions. May act as a fidelity factor of the translation reaction, by catalyzing a one-codon backward translocation of tRNAs on improperly translocated ribosomes. Back-translocation proceeds from a post-translocation (POST) complex to a pre-translocation (PRE) complex, thus giving elongation factor G a second chance to translocate the tRNAs correctly. Binds to ribosomes in a GTP-dependent manner. This Trichormus variabilis (strain ATCC 29413 / PCC 7937) (Anabaena variabilis) protein is Elongation factor 4.